The sequence spans 486 residues: uncharacterized protein (486 aa).

The chain crosses the membrane as a helical span at residues His7 to Tyr28. Residues Asn73, Asn83, and Asn195 are each glycosylated (N-linked (GlcNAc...) asparagine; by host). Positions Glu183–Leu233 form a coiled coil. The segment at Ser299 to Pro329 is disordered. Residues Gln300–Ser323 show a composition bias toward polar residues. Residue Asn461 is glycosylated (N-linked (GlcNAc...) asparagine; by host).

It belongs to the asfivirus B475L family.

The protein resides in the host membrane. This is an uncharacterized protein from Ornithodoros (relapsing fever ticks).